A 512-amino-acid polypeptide reads, in one-letter code: Kynurenine 3-monooxygenase (512 aa).

Belongs to the aromatic-ring hydroxylase family. KMO subfamily. FAD serves as cofactor.

The protein resides in the mitochondrion outer membrane. It carries out the reaction L-kynurenine + NADPH + O2 + H(+) = 3-hydroxy-L-kynurenine + NADP(+) + H2O. It participates in cofactor biosynthesis; NAD(+) biosynthesis; quinolinate from L-kynurenine: step 1/3. Its function is as follows. Catalyzes the hydroxylation of L-kynurenine (L-Kyn) to form 3-hydroxy-L-kynurenine (L-3OHKyn). Required for synthesis of quinolinic acid. This Aspergillus fumigatus (strain ATCC MYA-4609 / CBS 101355 / FGSC A1100 / Af293) (Neosartorya fumigata) protein is Kynurenine 3-monooxygenase (bna4).